The chain runs to 737 residues: Catalase-peroxidase (737 aa).

The signal sequence occupies residues 1–23; sequence MLKKILPVLITLAIVHNTPTAWA. The tryptophyl-tyrosyl-methioninium (Trp-Tyr) (with M-249) cross-link spans 102–223; it reads WHGAGTYRIY…LAATQMGLIY (122 aa). His-103 serves as the catalytic Proton acceptor. The tryptophyl-tyrosyl-methioninium (Tyr-Met) (with W-102) cross-link spans 223–249; it reads YVNPEGPNGKPDPVAAAKDIREAFARM. His-264 serves as a coordination point for heme b.

It belongs to the peroxidase family. Peroxidase/catalase subfamily. In terms of assembly, homodimer or homotetramer. Heme b serves as cofactor. Formation of the three residue Trp-Tyr-Met cross-link is important for the catalase, but not the peroxidase activity of the enzyme.

The catalysed reaction is H2O2 + AH2 = A + 2 H2O. It carries out the reaction 2 H2O2 = O2 + 2 H2O. Its function is as follows. Bifunctional enzyme with both catalase and broad-spectrum peroxidase activity. The protein is Catalase-peroxidase of Yersinia pseudotuberculosis serotype O:3 (strain YPIII).